A 275-amino-acid chain; its full sequence is Elongation factor Ts (275 aa).

Positions 80-83 (TDFV) are involved in Mg(2+) ion dislocation from EF-Tu.

The protein belongs to the EF-Ts family.

It is found in the cytoplasm. Associates with the EF-Tu.GDP complex and induces the exchange of GDP to GTP. It remains bound to the aminoacyl-tRNA.EF-Tu.GTP complex up to the GTP hydrolysis stage on the ribosome. This is Elongation factor Ts from Kineococcus radiotolerans (strain ATCC BAA-149 / DSM 14245 / SRS30216).